Here is a 531-residue protein sequence, read N- to C-terminus: Serine-type carboxypeptidase F (531 aa).

A signal peptide spans 1–25 (MLFRSLLSTAVLAVSLCTDNASAAK). Asn20 carries N-linked (GlcNAc...) asparagine glycosylation. Residues 26–52 (HGRFGQKARDAMNIAKRSANAVKHSLK) constitute a propeptide that is removed on maturation. 3 N-linked (GlcNAc...) asparagine glycosylation sites follow: Asn63, Asn94, and Asn155. Ser211 is a catalytic residue. Residues Asn228, Asn271, Asn309, and Asn378 are each glycosylated (N-linked (GlcNAc...) asparagine). Asp430 is a catalytic residue. 2 N-linked (GlcNAc...) asparagine glycosylation sites follow: Asn436 and Asn444. His507 is a catalytic residue.

This sequence belongs to the peptidase S10 family. Monomer.

Its activity is regulated as follows. Inhibited by DFP, and Hg(Cl)2. Functionally, removes any amino acid from the C-terminus of a long peptide. Digests preferentially peptides containing a positively charged residue in P1' position, as well as arginine, lysine or phenylalanine in P1 position of ester substrate. Also catalyzes peptide synthesis. This chain is Serine-type carboxypeptidase F (pepF), found in Aspergillus niger.